The sequence spans 723 residues: Multiple organellar RNA editing factor 4, mitochondrial (723 aa).

Residues 1-64 (MAMFSHRLRR…RLFSTTQYQY (64 aa)) constitute a mitochondrion transit peptide. 3 disordered regions span residues 180 to 303 (ITPG…GQTQ), 318 to 474 (RQEM…EGQP), and 663 to 723 (QNGG…NSRI). Residues 191-204 (EGFDSLKKESKPEQ) show a composition bias toward basic and acidic residues. Composition is skewed to polar residues over residues 219–233 (TSGQ…TLPD), 273–303 (GQWQ…GQTQ), 327–365 (GQAQ…QGAQ), and 373–430 (QGAQ…NYSP). Low complexity-rich tracts occupy residues 459 to 474 (QGQG…EGQP) and 682 to 695 (QGFS…TFQQ). Residues 714–723 (TETRKPNSRI) show a composition bias toward basic and acidic residues.

Belongs to the MORF family. As to quaternary structure, heterodimers with MORF8/RIP1, MORF1/RIP8 and MORF3/RIP3.

It localises to the mitochondrion. Its function is as follows. Involved in organellar RNA editing. Required for the processing of few RNA editing site in mitochondria. In Arabidopsis thaliana (Mouse-ear cress), this protein is Multiple organellar RNA editing factor 4, mitochondrial.